Consider the following 440-residue polypeptide: MSYNYFGKKILILGMGLTGISCINFFLKKGIKPKIIDESKHPSNFIKIPQNIEYSLGSLDHQWILESDLIVISPGISSFKPILIKARLLGIEIISDIELFSREVTCPIISITGTNGKSTVATMIEKIAKKSGYKAFLGGNIGVPVLEILDKEADLYIIELSSFQLENTFNLKSKIAVILNISEDHINRYPNGFQQYKNTKLSVYNQAEICIINSNDKIEKSLIHSKNKKWISFGTNRSDYRICSKSNDPILFFKNKKILNTSEILLYGYHNYNNILVSLAISDAMQFPRNDAINVLKSFSNLPHRFQIIKNEKGVRWINDSKSTNVNSTQVALNSIKTTGTIRLLLGGDSKSANFNILKNIFRTLKIKIYCFGRDGIKLSKICEKKSIYVENLKKAVILISKQVKSGDTVLLSPGCSSLGQFSNFEERGNLFIKLIKEIT.

113–119 (GTNGKST) provides a ligand contact to ATP.

Belongs to the MurCDEF family.

It is found in the cytoplasm. It carries out the reaction UDP-N-acetyl-alpha-D-muramoyl-L-alanine + D-glutamate + ATP = UDP-N-acetyl-alpha-D-muramoyl-L-alanyl-D-glutamate + ADP + phosphate + H(+). The protein operates within cell wall biogenesis; peptidoglycan biosynthesis. Functionally, cell wall formation. Catalyzes the addition of glutamate to the nucleotide precursor UDP-N-acetylmuramoyl-L-alanine (UMA). In Buchnera aphidicola subsp. Acyrthosiphon pisum (strain APS) (Acyrthosiphon pisum symbiotic bacterium), this protein is UDP-N-acetylmuramoylalanine--D-glutamate ligase (murD).